Here is a 590-residue protein sequence, read N- to C-terminus: G protein-coupled receptor kinase 5 (590 aa).

Residues 1-185 (MELENIVANT…LERQPVTKNT (185 aa)) are N-terminal. Positions 20-39 (GGKRKGKSKKWKEILKFPHI) are interaction with calmodulin. The 119-residue stretch at 53–171 (YCSLCDKQPV…LDSMYFDRFL (119 aa)) folds into the RGS domain. Residues 186 to 448 (FRQYRVLGKG…AAEVKRHPFF (263 aa)) form the Protein kinase domain. Residues 192-200 (LGKGGFGEV) and lysine 215 each bind ATP. The active-site Proton acceptor is the aspartate 311. A Nuclear localization signal motif is present at residues 388–395 (RKEKVKRE). Residues 449–514 (RNMNFKRLEA…GSVPIPWQSE (66 aa)) form the AGC-kinase C-terminal domain. Position 484 is a phosphoserine; by autocatalysis (serine 484). The residue at position 485 (threonine 485) is a Phosphothreonine; by autocatalysis. A sufficient for membrane localization region spans residues 546–565 (PKKGLLQRLFKRQHQNNSKS). The interval 554–590 (LFKRQHQNNSKSSPNSKTSFNHHINSNHVSSNSTGSS) is disordered. Residues 561-590 (NNSKSSPNSKTSFNHHINSNHVSSNSTGSS) are compositionally biased toward low complexity. The residue at position 579 (serine 579) is a Phosphoserine.

Belongs to the protein kinase superfamily. AGC Ser/Thr protein kinase family. GPRK subfamily. Interacts with ST13 (via the C-terminus 303-319 AA). Interacts with TP53/p53. Interacts with HTR4 (via C-terminus 330-346 AA); this interaction is promoted by 5-HT (serotonin). Interacts with HDAC5. Interacts with GIT1. Post-translationally, autophosphorylated. Autophosphorylation may play a critical role in the regulation of GRK5 kinase activity. Highest levels in lung, heart, retina, lingual epithelium. Very little in brain, liver, kidney.

It is found in the cytoplasm. It localises to the nucleus. The protein localises to the cell membrane. It carries out the reaction [G-protein-coupled receptor] + ATP = [G-protein-coupled receptor]-phosphate + ADP + H(+). Inhibited by calmodulin with an IC(50) of 50 nM. Calmodulin inhibits GRK5 association with receptor and phospholipid. Its function is as follows. Serine/threonine kinase that phosphorylates preferentially the activated forms of a variety of G-protein-coupled receptors (GPCRs). Such receptor phosphorylation initiates beta-arrestin-mediated receptor desensitization, internalization, and signaling events leading to their down-regulation. Phosphorylates a variety of GPCRs, including adrenergic receptors (Beta-2 adrenergic receptor), muscarinic acetylcholine receptors (more specifically Gi-coupled M2/M4 subtypes), dopamine receptors and opioid receptors. In addition to GPCRs, also phosphorylates various substrates: Hsc70-interacting protein/ST13, TP53/p53, HDAC5, and arrestin-1/ARRB1. Phosphorylation of ARRB1 by GRK5 inhibits G-protein independent MAPK1/MAPK3 signaling downstream of 5HT4-receptors. Phosphorylation of HDAC5, a repressor of myocyte enhancer factor 2 (MEF2) leading to nuclear export of HDAC5 and allowing MEF2-mediated transcription. Phosphorylation of TP53/p53, a crucial tumor suppressor, inhibits TP53/p53-mediated apoptosis. Phosphorylation of ST13 regulates internalization of the chemokine receptor. Phosphorylates rhodopsin (RHO) (in vitro) and a non G-protein-coupled receptor, LRP6 during Wnt signaling (in vitro). The polypeptide is G protein-coupled receptor kinase 5 (GRK5) (Bos taurus (Bovine)).